We begin with the raw amino-acid sequence, 126 residues long: Ribosome-binding factor A (126 aa).

The protein belongs to the RbfA family. As to quaternary structure, monomer. Binds 30S ribosomal subunits, but not 50S ribosomal subunits or 70S ribosomes.

Its subcellular location is the cytoplasm. Functionally, one of several proteins that assist in the late maturation steps of the functional core of the 30S ribosomal subunit. Associates with free 30S ribosomal subunits (but not with 30S subunits that are part of 70S ribosomes or polysomes). Required for efficient processing of 16S rRNA. May interact with the 5'-terminal helix region of 16S rRNA. This Treponema pallidum (strain Nichols) protein is Ribosome-binding factor A.